Reading from the N-terminus, the 420-residue chain is Annetocin receptor (420 aa).

Topologically, residues 1–54 are extracellular; it reads MEMDDDEAILLDDIYALASTPNQTIVTSSFPQTVSPGFLARRNEALAMVEVAVQ. The N-linked (GlcNAc...) asparagine glycan is linked to asparagine 22. A helical membrane pass occupies residues 55-75; the sequence is STILILTVVGNAAVLAMIVSL. Topologically, residues 76–83 are cytoplasmic; the sequence is SRHKDLGR. A helical membrane pass occupies residues 84 to 104; that stretch reads MYTMIGHLSCADLFVAIFNLL. The Extracellular segment spans residues 105–124; it reads PQLLWDVTHRFRGGRVLCKL. Cysteine 122 and cysteine 201 are joined by a disulfide. Residues 125-145 form a helical membrane-spanning segment; the sequence is VKYVQVVAMYASAYVLMSTAV. At 146–166 the chain is on the cytoplasmic side; that stretch reads DRYTAICHPMRSHTWTSTTAH. Residues 167 to 187 form a helical membrane-spanning segment; it reads YLVIGAWVLALVFAVPQLVIF. Topologically, residues 188–212 are extracellular; it reads DYVEVVPGSGVYDCVDHFRPRWTLP. Residues 213–233 form a helical membrane-spanning segment; the sequence is VYITWFALAVYVIPLVVLATI. Over 234-328 the chain is Cytoplasmic; that stretch reads YLRICVVVWK…KTKTVKLTLT (95 aa). A helical transmembrane segment spans residues 329 to 349; sequence VVISYLVCWAPFFVSHIWSAW. The Extracellular segment spans residues 350–360; it reads DPHAPFEGTEM. A helical membrane pass occupies residues 361 to 381; it reads VITLLLGSLNSCINPWIYLAF. Residues 382–420 lie on the Cytoplasmic side of the membrane; the sequence is SDQLRRKVTQCCPRSWGQRPSTLSHDSTDFRSGSRPTHS. A disordered region spans residues 397 to 420; it reads WGQRPSTLSHDSTDFRSGSRPTHS. Over residues 399–420 the composition is skewed to polar residues; that stretch reads QRPSTLSHDSTDFRSGSRPTHS.

The protein belongs to the G-protein coupled receptor 1 family. Vasopressin/oxytocin receptor subfamily. In terms of tissue distribution, nephridia in clitellum region.

It is found in the cell membrane. Receptor for annetocin. Activation by annetocin may induce egg-laying behavior through calcium-dependent signaling. This Eisenia fetida (Red wiggler worm) protein is Annetocin receptor.